We begin with the raw amino-acid sequence, 45 residues long: Pollen allergen Amb a 5 (45 aa).

Cystine bridges form between Cys4-Cys39, Cys11-Cys26, Cys18-Cys32, and Cys19-Cys43.

As to quaternary structure, monomer.

This is Pollen allergen Amb a 5 from Ambrosia artemisiifolia var. elatior (Short ragweed).